The chain runs to 419 residues: Dual specificity mitogen-activated protein kinase kinase 7 (419 aa).

Ala-2 is modified (N-acetylalanine). Residues 2–30 (AASSLEQKLSRLEAKLKQENREARRRIDL) adopt a coiled-coil conformation. A compositionally biased stretch (basic and acidic residues) spans 18–30 (KQENREARRRIDL). Residues 18–77 (KQENREARRRIDLNLDISPQRPRPTLQLPLANDGGSRSPSSESSPQHPTPPSRPRHMLGL) form a disordered region. The segment covering 36–63 (PQRPRPTLQLPLANDGGSRSPSSESSPQ) has biased composition (low complexity). The d Domain stretch occupies residues 37–57 (QRPRPTLQLPLANDGGSRSPS). Residues 120 to 380 (LENLGEMGSG…YNKLLEHSFI (261 aa)) enclose the Protein kinase domain. ATP contacts are provided by residues 126–134 (MGSGTCGQV) and Lys-149. Residue Asp-243 is the Proton acceptor of the active site. Residue Ser-271 is modified to Phosphoserine; by MAP3K. Position 275 is a phosphothreonine; by MAP3K (Thr-275). Positions 377 to 400 (HSFIKHYETLEVDVASWFKDVMAK) are DVD domain. Ser-411 bears the Phosphoserine mark.

It belongs to the protein kinase superfamily. STE Ser/Thr protein kinase family. MAP kinase kinase subfamily. In terms of assembly, interacts with VRK2. Interacts (via its D domain) with its substrates MAPK8/JNK1, MAPK9/JNK2 and MAPK10/JNK3. Interacts (via its DVD domain) with MAP3Ks activators like MAP3K5/ASK1 and MAP3K1/MEKK1. Interacts with MAPK8IP1/JIP1, MAPK8IP2/JIP2 and MAPK8IP3/JIP3 scaffold proteins. Interacts with RASSF7, the interaction promotes phosphorylation. Found in a complex with SH3RF1, RAC1, MAP3K11/MLK3, MAPK8IP1/JIP1 and MAPK8/JNK1. Found in a complex with SH3RF1, RAC2, MAP3K7/TAK1, MAPK8IP1/JIP1, MAPK8/JNK1 and MAPK9/JNK2. The cofactor is Mg(2+). Post-translationally, activated by phosphorylation on Ser-271 and Thr-275 by MAP kinase kinase kinases (MAP3Ks).

The protein localises to the nucleus. It is found in the cytoplasm. The enzyme catalyses L-seryl-[protein] + ATP = O-phospho-L-seryl-[protein] + ADP + H(+). The catalysed reaction is L-threonyl-[protein] + ATP = O-phospho-L-threonyl-[protein] + ADP + H(+). It catalyses the reaction L-tyrosyl-[protein] + ATP = O-phospho-L-tyrosyl-[protein] + ADP + H(+). Activated by phosphorylation by specific MAP kinase kinase kinases such as MAP3K1/MEKK1, MAP3K3/MEKK3, MAP3K11/MLK3 and MAP3K12/DLK. Functionally, dual specificity protein kinase which acts as an essential component of the MAP kinase signal transduction pathway. Essential component of the stress-activated protein kinase/c-Jun N-terminal kinase (SAP/JNK) signaling pathway. With MAP2K4/MKK4, is the one of the only known kinase to directly activate the stress-activated protein kinase/c-Jun N-terminal kinases MAPK8/JNK1, MAPK9/JNK2 and MAPK10/JNK3. MAP2K4/MKK4 and MAP2K7/MKK7 both activate the JNKs by phosphorylation, but they differ in their preference for the phosphorylation site in the Thr-Pro-Tyr motif. MAP2K4/MKK4 shows preference for phosphorylation of the Tyr residue and MAP2K7/MKK7 for the Thr residue. The monophosphorylation of JNKs on the Thr residue is sufficient to increase JNK activity indicating that MAP2K7/MKK7 is important to trigger JNK activity, while the additional phosphorylation of the Tyr residue by MAP2K4/MKK4 ensures optimal JNK activation. Has a specific role in JNK signal transduction pathway activated by pro-inflammatory cytokines. The MKK/JNK signaling pathway is also involved in mitochondrial death signaling pathway, including the release cytochrome c, leading to apoptosis. Part of a non-canonical MAPK signaling pathway, composed of the upstream MAP3K12 kinase and downstream MAP kinases MAPK1/ERK2 and MAPK3/ERK1, that enhances the AP-1-mediated transcription of APP in response to APOE. The polypeptide is Dual specificity mitogen-activated protein kinase kinase 7 (Rattus norvegicus (Rat)).